Here is a 308-residue protein sequence, read N- to C-terminus: D-alanine--D-alanine ligase (308 aa).

An ATP-grasp domain is found at 104–301 (KQIWQGSDLP…FDELCVAILE (198 aa)). 130 to 185 (IAELGLPVIIKPVHEGSSVGMSKVEKAEDFAAAIEKATQHDAVVMAEKWITGREFT) is a binding site for ATP. 3 residues coordinate Mg(2+): Asp-255, Glu-268, and Asn-270.

It belongs to the D-alanine--D-alanine ligase family. It depends on Mg(2+) as a cofactor. The cofactor is Mn(2+).

It localises to the cytoplasm. The enzyme catalyses 2 D-alanine + ATP = D-alanyl-D-alanine + ADP + phosphate + H(+). It functions in the pathway cell wall biogenesis; peptidoglycan biosynthesis. Functionally, cell wall formation. In Acinetobacter baumannii (strain ACICU), this protein is D-alanine--D-alanine ligase.